Consider the following 307-residue polypeptide: N-acetylglucosaminyl-diphospho-decaprenol L-rhamnosyltransferase (307 aa).

This sequence belongs to the glycosyltransferase 2 family. It depends on Mn(2+) as a cofactor. The cofactor is Mg(2+).

The enzyme catalyses N-acetyl-alpha-D-glucosaminyl-1-diphospho-trans,octa-cis-decaprenol + dTDP-beta-L-rhamnose = alpha-L-rhamnosyl-(1-&gt;3)-N-acetyl-alpha-D-glucosaminyl-diphospho-trans,octa-cis-decaprenol + dTDP + H(+). Involved in the biosynthesis of the mycolylarabinogalactan-peptidoglycan (mAGP) complex, an essential component of the mycobacterial cell wall. Catalyzes the transfer of the rhamnosyl moiety from dTDP-rhamnosyl (dTDP-Rha) onto the decaprenyl-pyrophosphoryl-GlcNAc (C50-PP-GlcNAc), yielding rhamnosyl-decaprenyl-pyrophosphoryl-GlcNAc (Rha-C50-PP-GlcNAc). The protein is N-acetylglucosaminyl-diphospho-decaprenol L-rhamnosyltransferase (wbbL) of Mycobacterium tuberculosis (strain CDC 1551 / Oshkosh).